Reading from the N-terminus, the 120-residue chain is Seripauperin-2 (120 aa).

A helical membrane pass occupies residues isoleucine 7–leucine 24.

The protein belongs to the SRP1/TIP1 family. Seripauperin subfamily.

It is found in the membrane. This is Seripauperin-2 (PAU2) from Saccharomyces cerevisiae (strain ATCC 204508 / S288c) (Baker's yeast).